The chain runs to 556 residues: Potassium-transporting ATPase potassium-binding subunit (556 aa).

The next 10 helical transmembrane spans lie at 6–26 (AGIAFLASLVAAVVLVHVPLG), 65–85 (SVLAFSAVSIVFLFGLQLVQG), 133–153 (GLAVQNFVSAAVGMAVAIALV), 176–196 (LRILLPLAIVGALLLVAGGAI), 249–269 (PTPWTNWLENFLILLIPFSLP), 283–303 (VAIAAIMGAIALASVSLTMLL), 378–398 (GLYGMLILAIITVFVAGLMVG), 415–435 (LAASYFLATPLIVLTGSAIAM), 483–503 (ALGLAMVFGRLLPIILVLALA), and 526–546 (FVGMTVGVTLILVALTFLPIL).

Belongs to the KdpA family. As to quaternary structure, the system is composed of three essential subunits: KdpA, KdpB and KdpC.

It localises to the cell membrane. Its function is as follows. Part of the high-affinity ATP-driven potassium transport (or Kdp) system, which catalyzes the hydrolysis of ATP coupled with the electrogenic transport of potassium into the cytoplasm. This subunit binds the extracellular potassium ions and delivers the ions to the membrane domain of KdpB through an intramembrane tunnel. This Mycolicibacterium smegmatis (strain ATCC 700084 / mc(2)155) (Mycobacterium smegmatis) protein is Potassium-transporting ATPase potassium-binding subunit.